The primary structure comprises 758 residues: 5-methyltetrahydropteroyltriglutamate--homocysteine methyltransferase (758 aa).

5-methyltetrahydropteroyltri-L-glutamate contacts are provided by residues 16–19 (RELK) and Lys116. L-homocysteine-binding positions include 436–438 (IGS) and Glu489. L-methionine contacts are provided by residues 436 to 438 (IGS) and Glu489. 5-methyltetrahydropteroyltri-L-glutamate-binding positions include 520–521 (RC) and Trp566. Asp604 contributes to the L-homocysteine binding site. L-methionine is bound at residue Asp604. Glu610 is a binding site for 5-methyltetrahydropteroyltri-L-glutamate. His646, Cys648, and Glu670 together coordinate Zn(2+). His699 functions as the Proton donor in the catalytic mechanism. Cys731 is a binding site for Zn(2+).

The protein belongs to the vitamin-B12 independent methionine synthase family. Zn(2+) is required as a cofactor.

The enzyme catalyses 5-methyltetrahydropteroyltri-L-glutamate + L-homocysteine = tetrahydropteroyltri-L-glutamate + L-methionine. The protein operates within amino-acid biosynthesis; L-methionine biosynthesis via de novo pathway; L-methionine from L-homocysteine (MetE route): step 1/1. Catalyzes the transfer of a methyl group from 5-methyltetrahydrofolate to homocysteine resulting in methionine formation. This is 5-methyltetrahydropteroyltriglutamate--homocysteine methyltransferase from Xylella fastidiosa (strain 9a5c).